The primary structure comprises 216 residues: Squamosa promoter-binding-like protein 13 (216 aa).

The interval 32-110 (GDGGAALPSP…PSGGGGGPRC (79 aa)) is disordered. Low complexity predominate over residues 67–91 (SSSAAVAAGASSSSSSSSVAAAARR). Over residues 94 to 108 (GRAGGGAPSGGGGGP) the composition is skewed to gly residues. The segment at 107-184 (GPRCQVERCG…AGHNERRRKS (78 aa)) adopts an SBP-type zinc-finger fold. Residues cysteine 110, cysteine 115, cysteine 132, histidine 135, cysteine 151, cysteine 154, histidine 158, and cysteine 170 each contribute to the Zn(2+) site. The Bipartite nuclear localization signal signature appears at 167–183 (KRSCRRRLAGHNERRRK). The interval 175 to 216 (AGHNERRRKSAADTAHGENCRHADQDAGRSHQGTGNPPFQIR) is disordered. The span at 189–203 (AHGENCRHADQDAGR) shows a compositional bias: basic and acidic residues. The span at 205–216 (HQGTGNPPFQIR) shows a compositional bias: polar residues.

Ubiquitous.

It is found in the nucleus. Its function is as follows. Trans-acting factor that binds specifically to the consensus nucleotide sequence 5'-TNCGTACAA-3'. May be involved in panicle development. The chain is Squamosa promoter-binding-like protein 13 (SPL13) from Oryza sativa subsp. japonica (Rice).